The sequence spans 197 residues: HTH-type transcriptional regulator BetI (197 aa).

Positions 8 to 68 constitute an HTH tetR-type domain; it reads PIRRSQLIHA…ATMRHLLSAL (61 aa). The H-T-H motif DNA-binding region spans 31-50; the sequence is SIALIARLAGVSNGIISHYF.

It functions in the pathway amine and polyamine biosynthesis; betaine biosynthesis via choline pathway [regulation]. Repressor involved in the biosynthesis of the osmoprotectant glycine betaine. It represses transcription of the choline transporter BetT and the genes of BetAB involved in the synthesis of glycine betaine. This Pseudomonas aeruginosa (strain LESB58) protein is HTH-type transcriptional regulator BetI.